The sequence spans 353 residues: Mitochondrial distribution and morphology protein 10 (353 aa).

It belongs to the MDM10 family. In terms of assembly, component of the ER-mitochondria encounter structure (ERMES) or MDM complex, composed of MMM1, MDM10, MDM12 and MDM34. Associates with the mitochondrial outer membrane sorting assembly machinery SAM(core) complex.

It is found in the mitochondrion outer membrane. In terms of biological role, component of the ERMES/MDM complex, which serves as a molecular tether to connect the endoplasmic reticulum and mitochondria. Components of this complex are involved in the control of mitochondrial shape and protein biogenesis and may function in phospholipid exchange. MDM10 is involved in the late assembly steps of the general translocase of the mitochondrial outer membrane (TOM complex). Functions in the TOM40-specific route of the assembly of outer membrane beta-barrel proteins, including the association of TOM40 with the receptor TOM22 and small TOM proteins. Can associate with the SAM(core) complex as well as the MDM12-MMM1 complex, both involved in late steps of the major beta-barrel assembly pathway, that is responsible for biogenesis of all outer membrane beta-barrel proteins. May act as a switch that shuttles between both complexes and channels precursor proteins into the TOM40-specific pathway. Plays a role in mitochondrial morphology and in the inheritance of mitochondria. This Yarrowia lipolytica (strain CLIB 122 / E 150) (Yeast) protein is Mitochondrial distribution and morphology protein 10.